We begin with the raw amino-acid sequence, 316 residues long: UDP-N-acetylenolpyruvoylglucosamine reductase (316 aa).

An FAD-binding PCMH-type domain is found at 27 to 225; sequence VGGKAERFYR…KTAINALLKK (199 aa). Arg190 is an active-site residue. Ser239 (proton donor) is an active-site residue. Glu309 is an active-site residue.

This sequence belongs to the MurB family. FAD is required as a cofactor.

Its subcellular location is the cytoplasm. The enzyme catalyses UDP-N-acetyl-alpha-D-muramate + NADP(+) = UDP-N-acetyl-3-O-(1-carboxyvinyl)-alpha-D-glucosamine + NADPH + H(+). Its pathway is cell wall biogenesis; peptidoglycan biosynthesis. Cell wall formation. The sequence is that of UDP-N-acetylenolpyruvoylglucosamine reductase from Coxiella burnetii (strain RSA 331 / Henzerling II).